Here is a 227-residue protein sequence, read N- to C-terminus: Ribonuclease S-5 (227 aa).

The N-terminal stretch at 1 to 27 (MGITGMVYVVTMVFLLIVLILSSSTVG) is a signal peptide. Residue Gln36 participates in RNA binding. The cysteines at positions 42 and 49 are disulfide-linked. Asn45 carries an N-linked (GlcNAc...) asparagine glycan. RNA-binding positions include His60, 97–98 (NV), Phe107, 110–111 (KE), and 114–115 (KH). The active-site Proton donor is the His60. A disulfide bridge links Cys75 with Cys118. Glu111 is an active-site residue. The Proton acceptor role is filled by His115. An N-linked (GlcNAc...) asparagine glycan is attached at Asn143. 2 disulfide bridges follow: Cys182-Cys220 and Cys197-Cys208.

This sequence belongs to the RNase T2 family. Post-translationally, N-glycan at Asn-45 consists of disaccharide (GlcNAc-GlcNAc). N-linked core structure at Asn-143 contains xylose.

It catalyses the reaction a ribonucleotidyl-ribonucleotide-RNA + H2O = a 3'-end 3'-phospho-ribonucleotide-RNA + a 5'-end dephospho-ribonucleoside-RNA + H(+). Self-incompatibility (SI) is the inherited ability of a flowering plant to prevent self-fertilization by discriminating between self and non-self pollen during pollination. In many species, self-incompatibility is controlled by the single, multiallelic locus S. The chain is Ribonuclease S-5 from Pyrus pyrifolia (Chinese pear).